The chain runs to 708 residues: DNA ligase 2 (708 aa).

Residues 71-75, 121-122, and E153 each bind NAD(+); these read DADYD and SL. K155 acts as the N6-AMP-lysine intermediate in catalysis. NAD(+)-binding residues include R176, E213, K330, and K354. Positions 448, 451, 466, and 471 each coordinate Zn(2+). The BRCT domain maps to 627-708; it reads ADAGTLAGKE…LLRLAEAAPE (82 aa).

This sequence belongs to the NAD-dependent DNA ligase family. LigA subfamily. The cofactor is Mg(2+). Requires Mn(2+) as cofactor.

It catalyses the reaction NAD(+) + (deoxyribonucleotide)n-3'-hydroxyl + 5'-phospho-(deoxyribonucleotide)m = (deoxyribonucleotide)n+m + AMP + beta-nicotinamide D-nucleotide.. DNA ligase that catalyzes the formation of phosphodiester linkages between 5'-phosphoryl and 3'-hydroxyl groups in double-stranded DNA using NAD as a coenzyme and as the energy source for the reaction. It is essential for DNA replication and repair of damaged DNA. This chain is DNA ligase 2, found in Opitutus terrae (strain DSM 11246 / JCM 15787 / PB90-1).